The primary structure comprises 538 residues: Thermosome subunit beta (538 aa).

The segment at 518–538 is disordered; it reads SSGSSEEGMEEMGGMGGMPPM. Residues 528 to 538 are compositionally biased toward gly residues; the sequence is EMGGMGGMPPM.

Belongs to the TCP-1 chaperonin family. Forms a Heterooligomeric complex of two stacked eight-membered rings.

Functionally, molecular chaperone; binds unfolded polypeptides in vitro, and has a weak ATPase activity. The chain is Thermosome subunit beta (thsB) from Methanothermobacter thermautotrophicus (strain ATCC 29096 / DSM 1053 / JCM 10044 / NBRC 100330 / Delta H) (Methanobacterium thermoautotrophicum).